Here is a 491-residue protein sequence, read N- to C-terminus: Cytosolic Fe-S cluster assembly factor NAR1 (491 aa).

8 residues coordinate [4Fe-4S] cluster: Cys-20, Cys-59, Cys-62, Cys-65, Cys-177, Cys-231, Cys-412, and Cys-416.

This sequence belongs to the NARF family. In terms of assembly, interacts with CIA1.

Component of the cytosolic Fe/S protein assembly machinery. Required for maturation of extramitochondrial Fe/S proteins. May play a role in the transfer of pre-assembled Fe/S clusters to target apoproteins. The polypeptide is Cytosolic Fe-S cluster assembly factor NAR1 (NAR1) (Saccharomyces cerevisiae (strain YJM789) (Baker's yeast)).